The following is a 438-amino-acid chain: Cyanidin-3-O-glucoside 2-O-glucuronosyltransferase (438 aa).

Residues S264, 315 to 316, 333 to 341, and 355 to 358 each bind UDP-alpha-D-glucuronate; these read WV, HCGWSSTME, and QFDQ.

Belongs to the UDP-glycosyltransferase family. Monomer. As to expression, expressed in petals. Not detected in sepals, stems, leaves, tubular corollas and white petals.

The protein localises to the cytoplasm. It catalyses the reaction cyanidin 3-O-beta-D-glucoside + UDP-alpha-D-glucuronate = cyanidin 3-O-(2-O-beta-D-glucuronosyl)-beta-D-glucoside + UDP + H(+). Its activity is regulated as follows. Inhibited by copper, mercury, UDP, UTP and partially by calcium, cadmium, iron and UMP. Not affected by cobalt, magnesium, manganese, zinc, nickel, tin, uridine, sadium malonate and glucose. Involved in the production of glucuronosylated anthocyanins that are the origin of the red coloration of flowers. Can use cyanidin 3-O-6''-O-malonylglucoside, cyanidin 3-O-glucoside and delphinidin 3-O-glucosideas substrates, but not pelargonidin 3-O-glucoside, cyanidin 3-O-3'',6''-O-dimalonylglucoside, pelargonidin 3,5-O-diglucoside, pelargonidin 3-O-6''-O-malonylglucoside-5-O-glucoside, quercetin 3-O-glucoside, quercetin 3-O-6''-O-malonylglucoside, daidzin, genistin,7-O-6''-O-malonylglucosides of daidzein and genistein, cyanidin, quercetin, daidzein, genistein p-Nitrophenyl beta-D-glucopyranoside, beta-estradiol, 17alpha-estradiol, 1-naphthol, 2-naphthol, 4-methylumbelliferone, and p-nitrophenol. Highly specific for UDP-glucuronate (UDP-GlcUA). Arg-25 is decisive with respect to UDP-sugar specificity. The sequence is that of Cyanidin-3-O-glucoside 2-O-glucuronosyltransferase (UGAT) from Bellis perennis (English daisy).